We begin with the raw amino-acid sequence, 206 residues long: Large ribosomal subunit protein uL13x (206 aa).

Belongs to the universal ribosomal protein uL13 family.

The polypeptide is Large ribosomal subunit protein uL13x (RPL13AC) (Arabidopsis thaliana (Mouse-ear cress)).